Reading from the N-terminus, the 186-residue chain is Hydra actinoporin-like toxin 5 (186 aa).

Residues 1–20 form the signal peptide; it reads MLLYVCLVNLLLQSPSGVDS. The short motif at 158–160 is the Cell attachment site element; the sequence is RDG.

This sequence belongs to the actinoporin family. HALT subfamily. In terms of assembly, octamer or nonamer in membranes. Monomer in the soluble state. In vitro, interacts with folate receptor alpha (of target organism).

It is found in the nematocyst. The protein resides in the secreted. Its subcellular location is the target cell membrane. Functionally, pore-forming protein that forms hydrophilic pores and causes cytolysis. Compared to equinatoxin-2 (AC P61914), it reveals lower cytolysis activity (5-12-fold difference, tested on erythrocytes), a larger pore size (probably 2-3 nm) and different affinity to membrane lipids (100-fold lower affinity to sphingomyelin). Binds to sulfatides (SFT) as well as to the two sphingolipids, lysophosphatidic acid (LPA) and sphingosine-1-phosphate (S1P). It seems to bind more strongly to LPA than to S1P and SFT. Shows cytolytic activity on HeLa cells, with a different potency than its paralogs (from most potent to less potent: HALT-4&gt;HALT-6~HALT-1&gt;HALT-3&gt;HALT-7&gt;HALT-2). Pore formation is a multi-step process that involves specific recognition of membrane lipid by a protein aromatic residues rich region, firm binding to the membrane (mainly driven by hydrophobic interactions) accompanied by the transfer of the N-terminal region to the lipid-water interface and finally pore formation after oligomerization of monomers. In vitro, binds to the folate receptor alpha (FOLR1), a GPI-anchored membrane protein that plays a major role in the uptake of folate/folic acid into cells via endocytosis, suggesting a possible involvement of this receptor in the mechanism of HALT-1-induced cell lysis. In vivo, does not cause visible paralysis in larvae of the blowfly Sarcophaga faculata, the most common arthropod prey of Hydra. In Hydra vulgaris (Hydra), this protein is Hydra actinoporin-like toxin 5.